Reading from the N-terminus, the 406-residue chain is Tyrosine--tRNA ligase (406 aa).

Position 35 (Y35) interacts with L-tyrosine. Positions 40–49 (PTADSLHVGH) match the 'HIGH' region motif. L-tyrosine contacts are provided by Y168 and Q172. Residues 228–232 (KMGKT) carry the 'KMSKS' region motif. K231 is an ATP binding site. The 66-residue stretch at 340–405 (STVLDVIAKV…GKKNYNKIEI (66 aa)) folds into the S4 RNA-binding domain.

This sequence belongs to the class-I aminoacyl-tRNA synthetase family. TyrS type 1 subfamily. As to quaternary structure, homodimer.

It localises to the cytoplasm. It catalyses the reaction tRNA(Tyr) + L-tyrosine + ATP = L-tyrosyl-tRNA(Tyr) + AMP + diphosphate + H(+). In terms of biological role, catalyzes the attachment of tyrosine to tRNA(Tyr) in a two-step reaction: tyrosine is first activated by ATP to form Tyr-AMP and then transferred to the acceptor end of tRNA(Tyr). The chain is Tyrosine--tRNA ligase from Clostridium botulinum (strain Eklund 17B / Type B).